Consider the following 355-residue polypeptide: Electron transfer flavoprotein subunit alpha, mitochondrial (355 aa).

295–323 (LYIAVGISGAIQHLAGMKDSKVIVAINKD) lines the FAD pocket.

This sequence belongs to the ETF alpha-subunit/FixB family. As to quaternary structure, heterodimer of an alpha and a beta subunit. FAD serves as cofactor.

It localises to the mitochondrion matrix. Its function is as follows. The electron transfer flavoprotein serves as a specific electron acceptor for several dehydrogenases, including five acyl-CoA dehydrogenases, glutaryl-CoA and sarcosine dehydrogenase. It transfers the electrons to the main mitochondrial respiratory chain via ETF-ubiquinone oxidoreductase (ETF dehydrogenase). This Dictyostelium discoideum (Social amoeba) protein is Electron transfer flavoprotein subunit alpha, mitochondrial (etfa).